The sequence spans 438 residues: Glyceraldehyde-3-phosphate dehydrogenase B, chloroplastic (438 aa).

The transit peptide at 1–53 (CLSKKFEVAEFAGLRSSGCVTFSNKESSFFDVVSAQLTPKTTRSTPVKGETVA) directs the protein to the chloroplast. Residues 64 to 65 (RI), D88, and R133 contribute to the NADP(+) site. D-glyceraldehyde 3-phosphate-binding positions include 207 to 209 (SCT), T238, R253, 266 to 267 (TG), and R289. Residue C208 is the Nucleophile of the active site. N372 contacts NADP(+).

Belongs to the glyceraldehyde-3-phosphate dehydrogenase family. In terms of assembly, tetramer of either four A chains (GAPDH 2) or two A and two B chains (GAPDH 1).

It is found in the plastid. It localises to the chloroplast. It catalyses the reaction D-glyceraldehyde 3-phosphate + phosphate + NADP(+) = (2R)-3-phospho-glyceroyl phosphate + NADPH + H(+). Its pathway is carbohydrate biosynthesis; Calvin cycle. The sequence is that of Glyceraldehyde-3-phosphate dehydrogenase B, chloroplastic (GAPB) from Nicotiana tabacum (Common tobacco).